A 505-amino-acid chain; its full sequence is Histidine ammonia-lyase (505 aa).

Residues 141–143 (ASG) constitute a cross-link (5-imidazolinone (Ala-Gly)). A 2,3-didehydroalanine (Ser) modification is found at S142.

The protein belongs to the PAL/histidase family. Contains an active site 4-methylidene-imidazol-5-one (MIO), which is formed autocatalytically by cyclization and dehydration of residues Ala-Ser-Gly.

It localises to the cytoplasm. The enzyme catalyses L-histidine = trans-urocanate + NH4(+). It functions in the pathway amino-acid degradation; L-histidine degradation into L-glutamate; N-formimidoyl-L-glutamate from L-histidine: step 1/3. The protein is Histidine ammonia-lyase of Bacillus anthracis.